We begin with the raw amino-acid sequence, 331 residues long: Geranylgeranyl pyrophosphate synthase dpmaD (331 aa).

Isopentenyl diphosphate-binding residues include K53, R56, and H85. Mg(2+) is bound by residues D92 and D96. R101 provides a ligand contact to dimethylallyl diphosphate. R102 is a binding site for isopentenyl diphosphate. The dimethylallyl diphosphate site is built by K179, T180, and Q213. Mg(2+) is bound at residue D216. N220, K230, and K240 together coordinate dimethylallyl diphosphate.

This sequence belongs to the FPP/GGPP synthase family. Mg(2+) is required as a cofactor.

It carries out the reaction isopentenyl diphosphate + dimethylallyl diphosphate = (2E)-geranyl diphosphate + diphosphate. The catalysed reaction is isopentenyl diphosphate + (2E)-geranyl diphosphate = (2E,6E)-farnesyl diphosphate + diphosphate. It catalyses the reaction isopentenyl diphosphate + (2E,6E)-farnesyl diphosphate = (2E,6E,10E)-geranylgeranyl diphosphate + diphosphate. Its pathway is secondary metabolite biosynthesis; terpenoid biosynthesis. Its function is as follows. Geranylgeranyl pyrophosphate synthase; part of the gene cluster that mediates the biosynthesis of the diterpenoid pyrones subglutinols A and B. The first step of the pathway is the synthesis of the alpha-pyrone moiety by the polyketide synthase dpmaA via condensation of one acetyl-CoA starter unit with 3 malonyl-CoA units and 2 methylations. The alpha-pyrone is then combined with geranylgeranyl pyrophosphate (GGPP) formed by the GGPP synthase dpmaD through the action of the prenyltransferase dpmaC to yield a linear alpha-pyrone diterpenoid. Subsequent steps in the diterpenoid pyrone biosynthetic pathway involve the decalin core formation, which is initiated by the epoxidation of the C10-C11 olefin by the FAD-dependent oxidoreductase dpmaE, and is followed by a cyclization cascade catalyzed by the terpene cyclase dpmaB. The dehydrogenase dpmaF is then involved in tetrahydrofuran (THF) ring formation at the C5 unit to complete the formation of subglutinols A and B. The chain is Geranylgeranyl pyrophosphate synthase dpmaD from Metarhizium anisopliae (Entomophthora anisopliae).